A 370-amino-acid polypeptide reads, in one-letter code: Probable G-protein coupled receptor 85 (370 aa).

The Extracellular segment spans residues Met1–Thr25. Asn3 carries an N-linked (GlcNAc...) asparagine glycan. The helical transmembrane segment at Ser26 to Ala46 threads the bilayer. Topologically, residues Lys47 to Tyr57 are cytoplasmic. A helical membrane pass occupies residues Phe58–Phe78. The Extracellular portion of the chain corresponds to Asn79 to Val96. An N-linked (GlcNAc...) asparagine glycan is attached at Asn83. Cys94 and Cys172 are joined by a disulfide. A helical transmembrane segment spans residues Ile97–Val117. Over Thr118–Thr137 the chain is Cytoplasmic. Residues Cys138–Leu158 form a helical membrane-spanning segment. At Asp159–Met188 the chain is on the extracellular side. Asn182 carries N-linked (GlcNAc...) asparagine glycosylation. A helical membrane pass occupies residues Leu189–Val209. Residues His210–Met286 are Cytoplasmic-facing. Residues Phe287 to Trp307 traverse the membrane as a helical segment. At Arg308–Gly313 the chain is on the extracellular side. Residues Pro314–Ile334 form a helical membrane-spanning segment. The Cytoplasmic segment spans residues Asn335–Ile370.

It belongs to the G-protein coupled receptor 1 family. In terms of assembly, interacts with DLG4 and DLG3.

The protein localises to the cell membrane. It localises to the endoplasmic reticulum. Its function is as follows. Orphan receptor. The protein is Probable G-protein coupled receptor 85 (GPR85) of Pongo abelii (Sumatran orangutan).